We begin with the raw amino-acid sequence, 200 residues long: 3-isopropylmalate dehydratase small subunit (200 aa).

It belongs to the LeuD family. LeuD type 1 subfamily. Heterodimer of LeuC and LeuD.

The catalysed reaction is (2R,3S)-3-isopropylmalate = (2S)-2-isopropylmalate. The protein operates within amino-acid biosynthesis; L-leucine biosynthesis; L-leucine from 3-methyl-2-oxobutanoate: step 2/4. In terms of biological role, catalyzes the isomerization between 2-isopropylmalate and 3-isopropylmalate, via the formation of 2-isopropylmaleate. The polypeptide is 3-isopropylmalate dehydratase small subunit (Yersinia pseudotuberculosis serotype O:1b (strain IP 31758)).